A 409-amino-acid polypeptide reads, in one-letter code: Dual-specificity RNA methyltransferase RlmN (409 aa).

The active-site Proton acceptor is Glu-121. One can recognise a Radical SAM core domain in the interval 127-376 (EEGRGTLCIS…IRTPRGRDIL (250 aa)). Cys-134 and Cys-379 are oxidised to a cystine. 3 residues coordinate [4Fe-4S] cluster: Cys-141, Cys-145, and Cys-148. Residues 205-206 (GE), Ser-237, 259-261 (SLH), and Asn-336 contribute to the S-adenosyl-L-methionine site. The active-site S-methylcysteine intermediate is Cys-379.

Belongs to the radical SAM superfamily. RlmN family. The cofactor is [4Fe-4S] cluster.

It localises to the cytoplasm. It catalyses the reaction adenosine(2503) in 23S rRNA + 2 reduced [2Fe-2S]-[ferredoxin] + 2 S-adenosyl-L-methionine = 2-methyladenosine(2503) in 23S rRNA + 5'-deoxyadenosine + L-methionine + 2 oxidized [2Fe-2S]-[ferredoxin] + S-adenosyl-L-homocysteine. The catalysed reaction is adenosine(37) in tRNA + 2 reduced [2Fe-2S]-[ferredoxin] + 2 S-adenosyl-L-methionine = 2-methyladenosine(37) in tRNA + 5'-deoxyadenosine + L-methionine + 2 oxidized [2Fe-2S]-[ferredoxin] + S-adenosyl-L-homocysteine. Its function is as follows. Specifically methylates position 2 of adenine 2503 in 23S rRNA and position 2 of adenine 37 in tRNAs. m2A2503 modification seems to play a crucial role in the proofreading step occurring at the peptidyl transferase center and thus would serve to optimize ribosomal fidelity. This Agrobacterium fabrum (strain C58 / ATCC 33970) (Agrobacterium tumefaciens (strain C58)) protein is Dual-specificity RNA methyltransferase RlmN.